We begin with the raw amino-acid sequence, 261 residues long: Adenosylcobinamide-GDP ribazoletransferase (261 aa).

A run of 7 helical transmembrane segments spans residues 4-26 (GLNG…QIPW), 40-60 (LTGL…SPFL), 62-82 (PLVL…GLHL), 110-130 (VGAF…LLLM), 140-160 (FTWL…VQLI), 197-217 (CFLL…IWLF), and 237-257 (IGAS…TFFL).

Belongs to the CobS family. It depends on Mg(2+) as a cofactor.

Its subcellular location is the cell membrane. The enzyme catalyses alpha-ribazole + adenosylcob(III)inamide-GDP = adenosylcob(III)alamin + GMP + H(+). The catalysed reaction is alpha-ribazole 5'-phosphate + adenosylcob(III)inamide-GDP = adenosylcob(III)alamin 5'-phosphate + GMP + H(+). It participates in cofactor biosynthesis; adenosylcobalamin biosynthesis; adenosylcobalamin from cob(II)yrinate a,c-diamide: step 7/7. Functionally, joins adenosylcobinamide-GDP and alpha-ribazole to generate adenosylcobalamin (Ado-cobalamin). Also synthesizes adenosylcobalamin 5'-phosphate from adenosylcobinamide-GDP and alpha-ribazole 5'-phosphate. The chain is Adenosylcobinamide-GDP ribazoletransferase from Halalkalibacterium halodurans (strain ATCC BAA-125 / DSM 18197 / FERM 7344 / JCM 9153 / C-125) (Bacillus halodurans).